The sequence spans 74 residues: Veswaprin-a (74 aa).

A signal peptide spans 1–24 (MSSGGLLLLLGLLTLWAEVTPISG). The region spanning 27-71 (RPKKPGLCPPRPQKPCVKECKNDWSCPGQQKCCNYGCIDECRDPI) is the WAP domain. Cystine bridges form between Cys-34/Cys-59, Cys-42/Cys-63, Cys-46/Cys-58, and Cys-52/Cys-67.

The protein belongs to the venom waprin family. Expressed by the venom gland.

The protein localises to the secreted. In terms of biological role, damages membranes of susceptible bacteria. Has no hemolytic activity. Not toxic to mice. Does not inhibit the proteinases elastase and cathepsin G. The polypeptide is Veswaprin-a (Demansia vestigiata (Lesser black whip snake)).